Reading from the N-terminus, the 79-residue chain is Small ribosomal subunit protein uS17 (79 aa).

It belongs to the universal ribosomal protein uS17 family. As to quaternary structure, part of the 30S ribosomal subunit.

Functionally, one of the primary rRNA binding proteins, it binds specifically to the 5'-end of 16S ribosomal RNA. In Orientia tsutsugamushi (strain Ikeda) (Rickettsia tsutsugamushi), this protein is Small ribosomal subunit protein uS17.